A 300-amino-acid polypeptide reads, in one-letter code: UDP-N-acetylenolpyruvoylglucosamine reductase (300 aa).

The 169-residue stretch at 22 to 190 (RVGGAAEWLA…LSARFRLQPG (169 aa)) folds into the FAD-binding PCMH-type domain. The active site involves arginine 169. The Proton donor role is filled by serine 220. Glutamate 290 is an active-site residue.

This sequence belongs to the MurB family. FAD serves as cofactor.

The protein localises to the cytoplasm. The enzyme catalyses UDP-N-acetyl-alpha-D-muramate + NADP(+) = UDP-N-acetyl-3-O-(1-carboxyvinyl)-alpha-D-glucosamine + NADPH + H(+). Its pathway is cell wall biogenesis; peptidoglycan biosynthesis. Cell wall formation. The protein is UDP-N-acetylenolpyruvoylglucosamine reductase of Synechococcus sp. (strain CC9605).